Here is a 148-residue protein sequence, read N- to C-terminus: Coactosin (148 aa).

The ADF-H domain maps to 1–134; the sequence is MSGFDLSEVA…VEDEIAAKIK (134 aa). Positions 71–76 match the F-loop; important for stable binding to G-actin and F-actin motif; that stretch reads DEESKR. Ser-147 is subject to Phosphoserine.

The protein belongs to the actin-binding proteins ADF family. Coactosin subfamily. Interacts with 14-3-3 protein 3. Phosphorylation at Ser-147 appears not to affect its binding to actin; however, it may regulate phagocytosis and motility.

The protein localises to the cytoplasm. It is found in the cell projection. The protein resides in the phagocytic cup. It localises to the pseudopodium. Its subcellular location is the cell membrane. The protein localises to the cytoskeleton. Functionally, actin-binding protein which is involved in F-actin stabilization. May play a role during phagocytosis and pseudopod formation by contributing to the maintenance of F-actin. This Entamoeba histolytica (strain ATCC 30459 / HM-1:IMSS / ABRM) protein is Coactosin.